A 427-amino-acid chain; its full sequence is Putative tyrosine recombinase XerC (427 aa).

Residues 1–81 form the Core-binding (CB) domain; it reads MTPQQLTEEY…HLRTIWGYAI (81 aa). In terms of domain architecture, Tyr recombinase spans 116-305; sequence RARSWLSMQV…DYDHMRAVLH (190 aa). Catalysis depends on residues Arg-156, Lys-183, His-256, Arg-259, and His-283. Catalysis depends on Tyr-292, which acts as the O-(3'-phospho-DNA)-tyrosine intermediate. Disordered stretches follow at residues 323–384 and 401–427; these read SGSP…PPDT and RAAT…DSLA. Basic and acidic residues predominate over residues 350-362; that stretch reads ARTEPSEPREHTQ. Over residues 402 to 413 the composition is skewed to low complexity; sequence AATASAVPAATS.

Belongs to the 'phage' integrase family.

It is found in the cytoplasm. Its function is as follows. Site-specific tyrosine recombinase, which acts by catalyzing the cutting and rejoining of the recombining DNA molecules. The protein is Putative tyrosine recombinase XerC of Pseudomonas aeruginosa.